Consider the following 142-residue polypeptide: Large ribosomal subunit protein uL16 (142 aa).

Belongs to the universal ribosomal protein uL16 family. In terms of assembly, part of the 50S ribosomal subunit.

Binds 23S rRNA and is also seen to make contacts with the A and possibly P site tRNAs. The sequence is that of Large ribosomal subunit protein uL16 from Mycoplasmopsis pulmonis (strain UAB CTIP) (Mycoplasma pulmonis).